Here is a 630-residue protein sequence, read N- to C-terminus: Eukaryotic translation initiation factor 2-alpha kinase 1 (630 aa).

The segment at 1-40 (MQGGNSGVRKREEEGDGAGAVAAPPAIDFPAEGPDPEYDE) is disordered. The SIFI-degron signature appears at 85–104 (LRSRQVFKLLCQTFIKMGLL). The 417-residue stretch at 167–583 (FEELAILGKG…AIQLLQSELF (417 aa)) folds into the Protein kinase domain. Residues 173-181 (LGKGGYGRV) and Lys-196 contribute to the ATP site. The interval 259-301 (DQEEDREQCGVKNDESSSSSIIFAEPTPEKEKRFGESDTENQN) is disordered. Phosphothreonine is present on Thr-285. A compositionally biased stretch (basic and acidic residues) spans 285–294 (TPEKEKRFGE). Residues 410 to 415 (ACPYVM) form an HRM 1 repeat. Catalysis depends on Asp-442, which acts as the Proton acceptor. A phosphothreonine; by autocatalysis mark is found at Thr-486 and Thr-488. Residue Thr-493 is modified to Phosphothreonine. The HRM 2 repeat unit spans residues 552 to 557 (RCPVQA).

Belongs to the protein kinase superfamily. Ser/Thr protein kinase family. GCN2 subfamily. In terms of assembly, synthesized in an inactive form that binds to the N-terminal domain of CDC37. Has to be associated with a multiprotein complex containing Hsp90, CDC37 and PPP5C for maturation and activation by autophosphorylation. The phosphatase PPP5C modulates this activation. Homodimer; homodimerizes in presence of heme, forming a disulfide-linked inactive homodimer. Interacts with DELE1; binds both to full-length DELE1 and processed form of DELE1 (S-DELE1) in response to stress, leading to activate its protein kinase activity and trigger the integrated stress response (ISR). In terms of processing, activated by autophosphorylation; phosphorylated predominantly on serine and threonine residues, but also on tyrosine residues. Autophosphorylation at Thr-488 is required for kinase activation. The active autophosphorylated form apparently is largely refractory to cellular heme fluctuations. Ubiquitinated and degraded by the SIFI complex once the mitochondrial stress has been resolved, thereby providing stress response silencing. Within the SIFI complex, UBR4 initiates ubiquitin chain that are further elongated or branched by KCMF1.

The enzyme catalyses L-seryl-[protein] + ATP = O-phospho-L-seryl-[protein] + ADP + H(+). It catalyses the reaction L-threonyl-[protein] + ATP = O-phospho-L-threonyl-[protein] + ADP + H(+). Its activity is regulated as follows. In normal conditions, the protein kinase activity is inhibited; inhibition is relieved by various stress conditions. Inhibited by heme: in presence of heme, forms a disulfide-linked inactive homodimer. Heme depletion relieves inhibition and stimulates kinase activity by autophosphorylation. Inhibited by the heme metabolites biliverdin and bilirubin. Induced by oxidative stress generated by arsenite treatment. Binding of nitric oxide (NO) to the heme iron in the N-terminal heme-binding domain activates the kinase activity, while binding of carbon monoxide (CO) suppresses kinase activity. Protein kinase activity is also activated upon binding to DELE1 in response to various stress, triggering the integrated stress response (ISR): activated by full-length DELE1 in response to iron deficiency, while it is activated by the processed form of DELE1 (S-DELE1) in response to mitochondrial stress. Metabolic-stress sensing protein kinase that phosphorylates the alpha subunit of eukaryotic translation initiation factor 2 (EIF2S1/eIF-2-alpha) in response to various stress conditions. Key activator of the integrated stress response (ISR) required for adaptation to various stress, such as heme deficiency, oxidative stress, osmotic shock, mitochondrial dysfunction and heat shock. EIF2S1/eIF-2-alpha phosphorylation in response to stress converts EIF2S1/eIF-2-alpha in a global protein synthesis inhibitor, leading to a global attenuation of cap-dependent translation, while concomitantly initiating the preferential translation of ISR-specific mRNAs, such as the transcriptional activator ATF4, and hence allowing ATF4-mediated reprogramming. Acts as a key sensor of heme-deficiency: in normal conditions, binds hemin via a cysteine thiolate and histidine nitrogenous coordination, leading to inhibit the protein kinase activity. This binding occurs with moderate affinity, allowing it to sense the heme concentration within the cell: heme depletion relieves inhibition and stimulates kinase activity, activating the ISR. Thanks to this unique heme-sensing capacity, plays a crucial role to shut off protein synthesis during acute heme-deficient conditions. In red blood cells (RBCs), controls hemoglobin synthesis ensuring a coordinated regulation of the synthesis of its heme and globin moieties. It thereby plays an essential protective role for RBC survival in anemias of iron deficiency. Iron deficiency also triggers activation by full-length DELE1. Also activates the ISR in response to mitochondrial dysfunction: HRI/EIF2AK1 protein kinase activity is activated upon binding to the processed form of DELE1 (S-DELE1), thereby promoting the ATF4-mediated reprogramming. Also acts as an activator of mitophagy in response to mitochondrial damage: catalyzes phosphorylation of eIF-2-alpha (EIF2S1) following activation by S-DELE1, thereby promoting mitochondrial localization of EIF2S1, triggering PRKN-independent mitophagy. The sequence is that of Eukaryotic translation initiation factor 2-alpha kinase 1 from Homo sapiens (Human).